A 238-amino-acid polypeptide reads, in one-letter code: Protein FEV (238 aa).

The ETS DNA-binding region spans 47–127; sequence IQLWQFLLEL…HGKRYAYRFD (81 aa). The segment at 129–238 is may mediate active transcriptional repression; the sequence is QGLAQACQPP…AASHLGGHYH (110 aa).

The protein belongs to the ETS family. In brain, exclusively expressed in the major serotonergic neurons of the dorsal and median raphe nuclei located in the midbrain and pons. Also detected in prostate and small intestine.

It is found in the nucleus. Functions as a transcriptional regulator. According to PubMed:12761502, it functions as a transcriptional repressor. Functions in the differentiation and the maintenance of the central serotonergic neurons. May play a role in cell growth. This chain is Protein FEV (FEV), found in Homo sapiens (Human).